We begin with the raw amino-acid sequence, 88 residues long: U-scoloptoxin(01)-Tl1a (88 aa).

A signal peptide spans 1–16 (MSVYGLLSLLIFIVLA). Positions 25 to 81 (GKDCSEKEEYLYDSSNCDIFYECDESLKPQRMMCGPGTGWNQDKLVCDFLTNIDCTR) constitute a Chitin-binding type-2 domain. A disulfide bridge connects residues C58 and C71.

Belongs to the scoloptoxin-01 family. Post-translationally, contains 3 disulfide bonds. In terms of tissue distribution, expressed by the venom gland.

Its subcellular location is the secreted. The sequence is that of U-scoloptoxin(01)-Tl1a from Thereuopoda longicornis (Long-legged centipede).